The following is a 232-amino-acid chain: MKIGIIGAMEEEVTLLRDKIENRQTITIGGSEIYTGQLHGVDVALLKSGIGKVAAATGATLLLERCQPDVIINTGSAGGLAPTLKVGDIVVSDEARYHDADVTAFGYEYGQLPGCPAGFKADDKLVAAAEDCIKALDLNAVRGLIVSGDAFINGSVALAKIRHNFPQAIAVEMEATAIAHVCHNFKVPFVVVRAISDVADQQSHLSFEEFLAVAARQSTLMVENLVQNLARG.

Catalysis depends on Glu12, which acts as the Proton acceptor. Substrate contacts are provided by residues Gly78, Ile152, and Met173–Glu174. Asp197 serves as the catalytic Proton donor.

It belongs to the PNP/UDP phosphorylase family. MtnN subfamily. Homodimer.

The enzyme catalyses S-adenosyl-L-homocysteine + H2O = S-(5-deoxy-D-ribos-5-yl)-L-homocysteine + adenine. It catalyses the reaction S-methyl-5'-thioadenosine + H2O = 5-(methylsulfanyl)-D-ribose + adenine. The catalysed reaction is 5'-deoxyadenosine + H2O = 5-deoxy-D-ribose + adenine. It participates in amino-acid biosynthesis; L-methionine biosynthesis via salvage pathway; S-methyl-5-thio-alpha-D-ribose 1-phosphate from S-methyl-5'-thioadenosine (hydrolase route): step 1/2. Its function is as follows. Catalyzes the irreversible cleavage of the glycosidic bond in both 5'-methylthioadenosine (MTA) and S-adenosylhomocysteine (SAH/AdoHcy) to adenine and the corresponding thioribose, 5'-methylthioribose and S-ribosylhomocysteine, respectively. Also cleaves 5'-deoxyadenosine, a toxic by-product of radical S-adenosylmethionine (SAM) enzymes, into 5-deoxyribose and adenine. Thus, is required for in vivo function of the radical SAM enzymes biotin synthase and lipoic acid synthase, that are inhibited by 5'-deoxyadenosine accumulation. In Klebsiella pneumoniae (strain 342), this protein is 5'-methylthioadenosine/S-adenosylhomocysteine nucleosidase.